The primary structure comprises 256 residues: Hypodermin-B (256 aa).

Positions 1–22 are cleaved as a signal peptide; sequence MLKFVILVCSVACVFGAVVPGG. Positions 23–30 are cleaved as a propeptide — activation peptide; that stretch reads MLPQLDGR. Residues 31-254 enclose the Peptidase S1 domain; the sequence is IVGGFEADIE…VRSWITENAK (224 aa). Cys56 and Cys72 are oxidised to a cystine. Active-site charge relay system residues include His71 and Asp116. 2 disulfides stabilise this stretch: Cys180-Cys197 and Cys206-Cys230. The Charge relay system role is filled by Ser210.

The protein belongs to the peptidase S1 family.

The protein resides in the secreted. Protease that shows preferential cleavage after Arg and Lys residues. This chain is Hypodermin-B, found in Hypoderma lineatum (Early cattle grub).